A 450-amino-acid chain; its full sequence is Phosphoglucosamine mutase (450 aa).

Catalysis depends on serine 101, which acts as the Phosphoserine intermediate. Residues serine 101, aspartate 240, aspartate 242, and aspartate 244 each contribute to the Mg(2+) site. Serine 101 bears the Phosphoserine mark.

The protein belongs to the phosphohexose mutase family. The cofactor is Mg(2+). Activated by phosphorylation.

It carries out the reaction alpha-D-glucosamine 1-phosphate = D-glucosamine 6-phosphate. Functionally, catalyzes the conversion of glucosamine-6-phosphate to glucosamine-1-phosphate. This Streptococcus pneumoniae serotype 19F (strain G54) protein is Phosphoglucosamine mutase.